Consider the following 707-residue polypeptide: E3 ubiquitin-protein ligase Praja-2 (707 aa).

A compositionally biased stretch (basic and acidic residues) spans 1–10 (MSQYTEKEPS). Disordered stretches follow at residues 1–32 (MSQY…QTIT), 72–120 (PKEN…PSIA), and 250–314 (QNGQ…VRPK). Serine 2 carries the N-acetylserine modification. 2 stretches are compositionally biased toward polar residues: residues 74–83 (ENTSGSSSLD) and 109–119 (LNQSTESSPSI). Residues 257–276 (RSSEDGVVRKRRQDDTDQGR) show a composition bias toward basic and acidic residues. A compositionally biased stretch (polar residues) spans 293 to 308 (EQNTSDRANHHGSSPE). A phosphoserine mark is found at serine 306 and serine 320. Position 339 is a phosphoserine; by PKA (serine 339). 2 disordered regions span residues 379 to 405 (RVTQ…QESR) and 424 to 493 (EDSS…QTSL). Residues 381 to 390 (TQRETERNRV) are compositionally biased toward basic and acidic residues. Threonine 385 is modified (phosphothreonine; by PKA). The segment covering 391–401 (TSENGATASGR) has biased composition (polar residues). Serine 430 is modified (phosphoserine). Over residues 465–481 (NDPELQSDSSGPEEENQ) the composition is skewed to acidic residues. Polar residues predominate over residues 482–491 (ELSLQEGEQT). The tract at residues 530 to 707 (DGNNNLEDDS…PANDNAEEAP (178 aa)) is interaction with PRKAR1A, PRKAR2A and PRKAR2B. Residues 549–569 (WSLFDGFADGLGVAEAISYVD) form a mediates interaction with TBC1D31 region. Residues 633–674 (CPICCSEYIKDDIATELPCHHFFHKPCVSIWLQKSGTCPVCR) form an RING-type; atypical zinc finger. Positions 685–701 (SAAASSDPDPDASPAND) are enriched in low complexity. A disordered region spans residues 685–707 (SAAASSDPDPDASPANDNAEEAP).

As to quaternary structure, binds ubiquitin-conjugating enzymes (E2s). In vitro, interacts with the ubiquitin-conjugating enzyme, UBE2D2. The phosphorylated form interacts with PRKAR1A, PRKAR2A and PRKAR2B. Binds the catalytic subunits of cAMP-dependent protein kinase. Interacts with MFHAS1. Interacts with TBC1D31; the interaction is direct and recruits PJA2 to centrosomes.

The protein localises to the cytoplasm. It localises to the cell membrane. Its subcellular location is the endoplasmic reticulum membrane. The protein resides in the golgi apparatus membrane. It is found in the synapse. The protein localises to the postsynaptic density. It localises to the cytoskeleton. Its subcellular location is the microtubule organizing center. The protein resides in the centrosome. It catalyses the reaction S-ubiquitinyl-[E2 ubiquitin-conjugating enzyme]-L-cysteine + [acceptor protein]-L-lysine = [E2 ubiquitin-conjugating enzyme]-L-cysteine + N(6)-ubiquitinyl-[acceptor protein]-L-lysine.. The protein operates within protein modification; protein ubiquitination. Functionally, has E2-dependent E3 ubiquitin-protein ligase activity. Responsible for ubiquitination of cAMP-dependent protein kinase type I and type II-alpha/beta regulatory subunits and for targeting them for proteasomal degradation. Essential for PKA-mediated long-term memory processes. Through the ubiquitination of MFHAS1, positively regulates the TLR2 signaling pathway that leads to the activation of the downstream p38 and JNK MAP kinases and promotes the polarization of macrophages toward the pro-inflammatory M1 phenotype. Plays a role in ciliogenesis by ubiquitinating OFD1. In Mus musculus (Mouse), this protein is E3 ubiquitin-protein ligase Praja-2 (Pja2).